The chain runs to 126 residues: DNA-directed RNA polymerase I subunit RPA12 (126 aa).

Residues Cys-20, Cys-23, Cys-38, Cys-41, Cys-87, and Cys-90 each coordinate Zn(2+). Residues 20–41 form a C4-type zinc finger; the sequence is CSDCGSVLPLPGAQDTVTCTRC. The segment at 83–123 adopts a TFIIS-type zinc-finger fold; that stretch reads VDRRCPRCGHEGMAYHTRQMRSADEGQTVFYTCTNCKFQEK. The Hairpin motif lies at 106-107; sequence DE. Positions 115 and 118 each coordinate Zn(2+).

Belongs to the archaeal RpoM/eukaryotic RPA12/RPB9/RPC11 RNA polymerase family. Component of the RNA polymerase I (Pol I) complex consisting of 13 subunits: a ten-subunit catalytic core composed of POLR1A/RPA1, POLR1B/RPA2, POLR1C/RPAC1, POLR1D/RPAC2, POLR1H/RPA12, POLR2E/RPABC1, POLR2F/RPABC2, POLR2H/RPABC3, POLR2K/RPABC4 and POLR2L/RPABC5; a mobile stalk subunit POLR1F/RPA43 protruding from the core and additional subunits homologous to general transcription factors POLR1E/RPA49 and POLR1G/RPA34. Part of Pol I pre-initiation complex (PIC), in which Pol I core assembles with RRN3 and promoter-bound UTBF and SL1/TIF-IB complex.

It localises to the nucleus. The protein localises to the nucleolus. Its function is as follows. Core component of RNA polymerase I (Pol I), a DNA-dependent RNA polymerase which synthesizes ribosomal RNA precursors using the four ribonucleoside triphosphates as substrates. Can mediate Pol I proofreading of the nascent RNA transcript. Anchors into the Pol I active site to monitor transcription fidelity and cleave mis-incorporated 5'-ribonucleotides. This Macaca mulatta (Rhesus macaque) protein is DNA-directed RNA polymerase I subunit RPA12.